Reading from the N-terminus, the 110-residue chain is Nucleoid-associated protein ESA_02800 (110 aa).

Positions 89–110 are disordered; that stretch reads QKEKMASVSSGMQLPPGFKMPF.

This sequence belongs to the YbaB/EbfC family. As to quaternary structure, homodimer.

The protein resides in the cytoplasm. The protein localises to the nucleoid. In terms of biological role, binds to DNA and alters its conformation. May be involved in regulation of gene expression, nucleoid organization and DNA protection. In Cronobacter sakazakii (strain ATCC BAA-894) (Enterobacter sakazakii), this protein is Nucleoid-associated protein ESA_02800.